We begin with the raw amino-acid sequence, 289 residues long: ATP synthase gamma chain (289 aa).

It belongs to the ATPase gamma chain family. F-type ATPases have 2 components, CF(1) - the catalytic core - and CF(0) - the membrane proton channel. CF(1) has five subunits: alpha(3), beta(3), gamma(1), delta(1), epsilon(1). CF(0) has three main subunits: a, b and c.

The protein resides in the cell membrane. Its function is as follows. Produces ATP from ADP in the presence of a proton gradient across the membrane. The gamma chain is believed to be important in regulating ATPase activity and the flow of protons through the CF(0) complex. The polypeptide is ATP synthase gamma chain (Lactococcus lactis subsp. cremoris (strain SK11)).